Here is a 242-residue protein sequence, read N- to C-terminus: MPDYIRISRAADSLRDIKITPHFLPHTDGSCLIECGNTKVICTASIDENVPPFLRGKNQGWVTAEYGMLPASTASRMLREASAGKQSGRTQEIQRLIGRSLRAVVDMEKLGERQILIDCDVIQADGGTRTASITGAFVALQIAVGKLVSDGILSENPIREAVAAVSVGVVNGVPLLDLDYPEDSGCDSDVNIVMTASGKIIEIQGTAEDAPFSLDELGKLVALAQKGIGELLQHQQNALSAA.

Phosphate is bound by residues R89 and G127–R129.

Belongs to the RNase PH family. As to quaternary structure, homohexameric ring arranged as a trimer of dimers.

The enzyme catalyses tRNA(n+1) + phosphate = tRNA(n) + a ribonucleoside 5'-diphosphate. Functionally, phosphorolytic 3'-5' exoribonuclease that plays an important role in tRNA 3'-end maturation. Removes nucleotide residues following the 3'-CCA terminus of tRNAs; can also add nucleotides to the ends of RNA molecules by using nucleoside diphosphates as substrates, but this may not be physiologically important. Probably plays a role in initiation of 16S rRNA degradation (leading to ribosome degradation) during starvation. In Neisseria meningitidis serogroup B (strain ATCC BAA-335 / MC58), this protein is Ribonuclease PH.